Consider the following 397-residue polypeptide: Geranylgeranyl pyrophosphate synthase AN1592 (397 aa).

The interval 1 to 67 (MSPPLDSALE…SHDSSASSNI (67 aa)) is disordered. The segment covering 13 to 42 (SEYKETAFPRTEKDPSQYKEHDLVTPEKEI) has biased composition (basic and acidic residues). Low complexity predominate over residues 52 to 67 (SHSSHGSHDSSASSNI). Isopentenyl diphosphate is bound by residues K120, R123, and H152. Mg(2+)-binding residues include D159 and D163. Position 168 (R168) interacts with dimethylallyl diphosphate. R169 lines the isopentenyl diphosphate pocket. Positions 247, 248, and 281 each coordinate dimethylallyl diphosphate. D284 serves as a coordination point for Mg(2+). Positions 288, 298, and 308 each coordinate dimethylallyl diphosphate.

Belongs to the FPP/GGPP synthase family. It depends on Mg(2+) as a cofactor.

The catalysed reaction is isopentenyl diphosphate + dimethylallyl diphosphate = (2E)-geranyl diphosphate + diphosphate. The enzyme catalyses isopentenyl diphosphate + (2E)-geranyl diphosphate = (2E,6E)-farnesyl diphosphate + diphosphate. It carries out the reaction isopentenyl diphosphate + (2E,6E)-farnesyl diphosphate = (2E,6E,10E)-geranylgeranyl diphosphate + diphosphate. It functions in the pathway secondary metabolite biosynthesis; terpenoid biosynthesis. Geranylgeranyl pyrophosphate synthase; part of the gene cluster that mediates the biosynthesis of the diterpene ent-pimara-8(14),15-diene (PD). Within the cluster, the HMG-CoA reductase AN1593 functions in the mevalonate pathway, which produces isoprenoid precursors. The geranylgeranyl pyrophosphate (GGPP) synthase AN1592 is needed in the formation of GGPP, the precursor for diterpenes. Lastly, the pimaradiene synthase pbcA performs the 2 cyclization steps that convert GGPP to ent-pimara-8(14),15-diene. The putative roles of the remaining cluster enzymes in ent-pimara-8(14),15-diene biosynthesis is unclear. The cytochrome P450 monooxygenase AN1598, the glutathione S-transferase AN1595, the oxidoreductases AN1596 and AN1597 probably function as decorative enzymes. It is possible that in biological conditions the compound is oxidized to ent-pimara-8(14),15-dien-19-oic acid, which is a bioactive diterpene compound predominant in many plant extracts. The protein is Geranylgeranyl pyrophosphate synthase AN1592 of Emericella nidulans (strain FGSC A4 / ATCC 38163 / CBS 112.46 / NRRL 194 / M139) (Aspergillus nidulans).